The following is a 439-amino-acid chain: Methylenetetrahydrofolate--tRNA-(uracil-5-)-methyltransferase TrmFO (439 aa).

8 to 13 (GAGLAG) lines the FAD pocket.

It belongs to the MnmG family. TrmFO subfamily. It depends on FAD as a cofactor.

The protein localises to the cytoplasm. The catalysed reaction is uridine(54) in tRNA + (6R)-5,10-methylene-5,6,7,8-tetrahydrofolate + NADH + H(+) = 5-methyluridine(54) in tRNA + (6S)-5,6,7,8-tetrahydrofolate + NAD(+). It catalyses the reaction uridine(54) in tRNA + (6R)-5,10-methylene-5,6,7,8-tetrahydrofolate + NADPH + H(+) = 5-methyluridine(54) in tRNA + (6S)-5,6,7,8-tetrahydrofolate + NADP(+). Catalyzes the folate-dependent formation of 5-methyl-uridine at position 54 (M-5-U54) in all tRNAs. The protein is Methylenetetrahydrofolate--tRNA-(uracil-5-)-methyltransferase TrmFO of Lacticaseibacillus paracasei (strain ATCC 334 / BCRC 17002 / CCUG 31169 / CIP 107868 / KCTC 3260 / NRRL B-441) (Lactobacillus paracasei).